Reading from the N-terminus, the 75-residue chain is UPF0154 protein MYPU_1460 (75 aa).

Residues 8–28 (GLIVGLSILFFIIGGVVAFFV) form a helical membrane-spanning segment.

It belongs to the UPF0154 family.

It localises to the membrane. This chain is UPF0154 protein MYPU_1460, found in Mycoplasmopsis pulmonis (strain UAB CTIP) (Mycoplasma pulmonis).